The sequence spans 316 residues: Ribose-phosphate pyrophosphokinase (316 aa).

Residues 39 to 41 (DGE) and 98 to 99 (RQ) contribute to the ATP site. Mg(2+) contacts are provided by histidine 133 and aspartate 172. Lysine 195 is a catalytic residue. D-ribose 5-phosphate contacts are provided by residues arginine 197, aspartate 221, and 225–229 (DTGGT).

It belongs to the ribose-phosphate pyrophosphokinase family. Class I subfamily. Homohexamer. Mg(2+) serves as cofactor.

It localises to the cytoplasm. The enzyme catalyses D-ribose 5-phosphate + ATP = 5-phospho-alpha-D-ribose 1-diphosphate + AMP + H(+). Its pathway is metabolic intermediate biosynthesis; 5-phospho-alpha-D-ribose 1-diphosphate biosynthesis; 5-phospho-alpha-D-ribose 1-diphosphate from D-ribose 5-phosphate (route I): step 1/1. In terms of biological role, involved in the biosynthesis of the central metabolite phospho-alpha-D-ribosyl-1-pyrophosphate (PRPP) via the transfer of pyrophosphoryl group from ATP to 1-hydroxyl of ribose-5-phosphate (Rib-5-P). This is Ribose-phosphate pyrophosphokinase from Ralstonia nicotianae (strain ATCC BAA-1114 / GMI1000) (Ralstonia solanacearum).